We begin with the raw amino-acid sequence, 349 residues long: MNGTEGNNFYIPLSNRTGLARSPYEYPQYYLAEPWQFKLLAVYMFFLICLGFPINGLTLLVTAQHKKLRQPLNFILVNLAVAGTIMVCFGFTVTFYTAINGYFVLGPTGCAIEGFMATLGGEVALWSLVVLAVERYIVVCKPMGSFKFSASHAFAGCAFTWVMAMACAAPPLVGWSRYIPEGMQCSCGPDYYTLNPEYNNESYVLYMFICHFILPVTIIFFTYGRLVCTVKAAAAQQQESESTQKAEREVTRMVILMVLGFLIAWTPYATVAAWIFFNKGAAFSAQFMAVPAFFSKTSALYNPVIYVLLNKQFRNCMLTTLFCGKNPLGDDESSTVSTSKTEVSSVSPA.

At M1–Q36 the chain is on the extracellular side. 2 N-linked (GlcNAc...) asparagine glycosylation sites follow: N2 and N15. The chain crosses the membrane as a helical span at residues F37 to V61. Residues T62–N73 lie on the Cytoplasmic side of the membrane. Residues F74–I99 form a helical membrane-spanning segment. At N100–E113 the chain is on the extracellular side. A disulfide bridge links C110 with C187. The helical transmembrane segment at G114 to V133 threads the bilayer. The Cytoplasmic portion of the chain corresponds to E134–H152. Residues A153–S176 form a helical membrane-spanning segment. Topologically, residues R177–S202 are extracellular. N200 carries an N-linked (GlcNAc...) asparagine glycan. A helical membrane pass occupies residues Y203–V230. Over K231–R252 the chain is Cytoplasmic. A helical membrane pass occupies residues M253–F276. At F277–S284 the chain is on the extracellular side. Residues A285–L309 traverse the membrane as a helical segment. N6-(retinylidene)lysine is present on K296. At N310–A349 the chain is on the cytoplasmic side. Residues G329–A349 form a disordered region. Low complexity predominate over residues S334–A349.

It belongs to the G-protein coupled receptor 1 family. Opsin subfamily. Post-translationally, phosphorylated on some or all of the serine and threonine residues present in the C-terminal region. In terms of tissue distribution, retinal double cone accessory photoreceptor cell outer segments.

It is found in the membrane. Visual pigments are the light-absorbing molecules that mediate vision. They consist of an apoprotein, opsin, covalently linked to cis-retinal. The chain is Green-sensitive opsin-4 (opn1mw4) from Danio rerio (Zebrafish).